The chain runs to 486 residues: O-methyltransferase gedA (486 aa).

Residues 298–299 (GG), Asp321, 353–354 (SF), and Arg369 contribute to the S-adenosyl-L-methionine site. His373 functions as the Proton acceptor in the catalytic mechanism.

This sequence belongs to the class I-like SAM-binding methyltransferase superfamily. Cation-independent O-methyltransferase family.

It carries out the reaction emodin + S-adenosyl-L-methionine = questin + S-adenosyl-L-homocysteine + H(+). It participates in secondary metabolite biosynthesis. O-methyltransferase; part of the gene cluster that mediates the biosynthesis of geodin, an intermediate in the biosynthesis of other natural products. The pathway begins with the synthesis of atrochrysone thioester by the polyketide synthase (PKS) gedC. The atrochrysone carboxyl ACP thioesterase gedB then breaks the thioester bond and releases the atrochrysone carboxylic acid from gedC. The atrochrysone carboxylic acid is then converted to atrochrysone which is further transformed into emodinanthrone. The next step is performed by the emodinanthrone oxygenase gedH that catalyzes the oxidation of emodinanthrone to emodin. Emodin O-methyltransferase encoded probably by gedA then catalyzes methylation of the 8-hydroxy group of emodin to form questin. Ring cleavage of questin by questin oxidase gedK leads to desmethylsulochrin via several intermediates including questin epoxide. Another methylation step probably catalyzed by methyltransferase gedG leads to the formation of sulochrin which is further converted to dihydrogeodin by the sulochrin halogenase gedL. Finally, the dihydrogeodin oxidase gedJ catalyzes the stereospecific phenol oxidative coupling reaction converting dihydrogeodin to geodin. This chain is O-methyltransferase gedA, found in Aspergillus terreus (strain NIH 2624 / FGSC A1156).